We begin with the raw amino-acid sequence, 1096 residues long: Mediator of replication checkpoint protein 1 (1096 aa).

The span at 68 to 85 (EGKKAPEQNHNNGKDRSE) shows a compositional bias: basic and acidic residues. The interval 68–90 (EGKKAPEQNHNNGKDRSENSLPT) is disordered. Serine 144 is subject to Phosphoserine. 3 disordered regions span residues 166 to 200 (ALKT…IEPQ), 294 to 316 (IQSE…YKKP), and 336 to 365 (DDSS…LHEN). Over residues 181-200 (RIDSSGATSQTQPIKSIEPQ) the composition is skewed to polar residues. Positions 294-315 (IQSELASEDSKREKARNVEYKK) are enriched in basic and acidic residues. Residues 336 to 346 (DDSSSNEDDDI) show a composition bias toward acidic residues. 3 positions are modified to phosphoserine: serine 409, serine 411, and serine 434. The stretch at 488 to 542 (QKEVIETKGLKLEDMAKEKEIVENLLEQEILRNKRIRQKEKRREKLEENDFQLNA) forms a coiled coil. The tract at residues 527–620 (EKRREKLEEN…VEAKPKEKAD (94 aa)) is disordered. Over residues 547-560 (SDSGSESSGFALSG) the composition is skewed to low complexity. Positions 591 to 600 (KQKKSHHVKH) are enriched in basic residues. A phosphoserine mark is found at serine 605 and serine 607. Phosphothreonine is present on threonine 609. A compositionally biased stretch (basic and acidic residues) spans 611–620 (VEAKPKEKAD). A coiled-coil region spans residues 652 to 716 (DTQNIEEVMA…IKELKKRGVT (65 aa)). The disordered stretch occupies residues 724–743 (EESEDEWHGIGGADGEGSDD). Phosphoserine occurs at positions 801 and 807. The span at 881 to 898 (DTQDNSINVGDNTGNNEQ) shows a compositional bias: polar residues. Positions 881-903 (DTQDNSINVGDNTGNNEQKPVDQ) are disordered. A Phosphoserine modification is found at serine 911. The disordered stretch occupies residues 1058 to 1096 (RKTEGSHRYHHDHHNKKMKMKTKTKSNKLFESGQDSFDN). Over residues 1065 to 1083 (RYHHDHHNKKMKMKTKTKS) the composition is skewed to basic residues.

In terms of assembly, interacts with CDC45 in S phase. Phosphorylated by MEC1 and RAD53.

The protein localises to the nucleus. In terms of biological role, required for normal DNA replication. Phosphorylated in response to DNA replication stress. Phosphorylation allows it to mediate the activation of RAD53. This is Mediator of replication checkpoint protein 1 (MRC1) from Saccharomyces cerevisiae (strain ATCC 204508 / S288c) (Baker's yeast).